The following is a 479-amino-acid chain: Cyclic AMP-responsive element-binding protein 3-like protein 3 (479 aa).

Over 1–317 (MDGDIAAGKM…QSTSKPAHAG (317 aa)) the chain is Cytoplasmic. Positions 67–144 (CILGPGDSDP…CPEPPRTQVQ (78 aa)) are disordered. A compositionally biased stretch (polar residues) spans 98-110 (PQDTPPRSGTEPA). The bZIP domain occupies 239–302 (VLKKIRRKIR…LSLLEQLKHL (64 aa)). Residues 241–270 (KKIRRKIRNKQSAQESRKKKKEYIDGLENR) are basic motif. Residues 281–302 (LQRKVLHLEKQNLSLLEQLKHL) are leucine-zipper. Lys-290 participates in a covalent cross-link: Glycyl lysine isopeptide (Lys-Gly) (interchain with G-Cter in ubiquitin). Residues 318–338 (TCIAVLLLSFALIILPSISPF) form a helical; Signal-anchor for type II membrane protein membrane-spanning segment. Over 339 to 479 (NSNKVDSPGD…RLVQDALGVL (141 aa)) the chain is Lumenal. 3 N-linked (GlcNAc...) asparagine glycosylation sites follow: Asn-411, Asn-418, and Asn-425.

It belongs to the bZIP family. ATF subfamily. In terms of assembly, binds DNA as a dimer. May form homodimers. Interacts with ATF6. Interacts with SYNV1/HRD1; this interaction leads to CREB3L3 ubiquitination and proteasomal degradation. Post-translationally, following ER stress a fragment containing the cytoplasmic transcription factor domain is released by proteolysis. The cleavage seems to be performed sequentially by site-1 and site-2 proteases. N-glycosylation is required for optimal proteolytic activation. In terms of processing, ubiquitinated at Lys-290 by SYNV1/HRD1 via 'Lys-27'-linked ubiquitin. Expressed in adult liver (at protein level) and small intestine.

The protein resides in the endoplasmic reticulum membrane. It localises to the nucleus. In terms of biological role, transcription factor that may act during endoplasmic reticulum (ER) stress by activating unfolded protein response target genes. Activated in response to cAMP stimulation. Binds to the cAMP response element (CRE). Activates transcription through box-B element. Activates transcription through CRE. May function synergistically with ATF6. In acute inflammatory response, may activate expression of acute phase response (APR) genes. May be involved in growth suppression. Regulates FGF21 transcription. Plays a crucial role in the regulation of triglyceride metabolism and is required for the maintenance of normal plasma triglyceride concentrations. In Mus musculus (Mouse), this protein is Cyclic AMP-responsive element-binding protein 3-like protein 3 (Creb3l3).